The following is a 483-amino-acid chain: Threonine synthase-like 2 (483 aa).

Lys113 is subject to N6-(pyridoxal phosphate)lysine.

Belongs to the threonine synthase family. The cofactor is pyridoxal 5'-phosphate.

Acts as a catabolic phospho-lyase on both gamma- and beta-phosphorylated substrates. Degrades O-phospho-threonine (PThr) to alpha-ketobutyrate, ammonia and phosphate. Also degrades O-phospho-homoserine (PHS), but this is not its physiological substrate. The polypeptide is Threonine synthase-like 2 (Thnsl2) (Mus musculus (Mouse)).